Reading from the N-terminus, the 862-residue chain is S-layer protein EA1 (862 aa).

Residues methionine 1–alanine 29 form the signal peptide. 3 SLH domains span residues alanine 30–proline 93, serine 94–glycine 151, and glutamate 152–glutamine 214.

It is found in the secreted. Its subcellular location is the cell wall. The protein localises to the S-layer. Its function is as follows. The S-layer is a paracrystalline mono-layered assembly of proteins which coat the surface of bacteria. The chain is S-layer protein EA1 (eag) from Bacillus anthracis.